The chain runs to 308 residues: Porphobilinogen deaminase (308 aa).

An S-(dipyrrolylmethanemethyl)cysteine modification is found at cysteine 241.

It belongs to the HMBS family. As to quaternary structure, monomer. The cofactor is dipyrromethane.

The catalysed reaction is 4 porphobilinogen + H2O = hydroxymethylbilane + 4 NH4(+). Its pathway is porphyrin-containing compound metabolism; protoporphyrin-IX biosynthesis; coproporphyrinogen-III from 5-aminolevulinate: step 2/4. In terms of biological role, tetrapolymerization of the monopyrrole PBG into the hydroxymethylbilane pre-uroporphyrinogen in several discrete steps. The sequence is that of Porphobilinogen deaminase from Exiguobacterium sibiricum (strain DSM 17290 / CCUG 55495 / CIP 109462 / JCM 13490 / 255-15).